Here is an 887-residue protein sequence, read N- to C-terminus: Pyruvate dehydrogenase E1 component (887 aa).

Mg(2+)-binding residues include Asp-231, Asn-261, and Gln-263. Lys-716 carries the post-translational modification N6-acetyllysine.

Homodimer. Part of the PDH complex, consisting of multiple copies of pyruvate dehydrogenase (E1), dihydrolipoamide acetyltransferase (E2) and lipoamide dehydrogenase (E3). The cofactor is Mg(2+). Requires thiamine diphosphate as cofactor.

The catalysed reaction is N(6)-[(R)-lipoyl]-L-lysyl-[protein] + pyruvate + H(+) = N(6)-[(R)-S(8)-acetyldihydrolipoyl]-L-lysyl-[protein] + CO2. In terms of biological role, component of the pyruvate dehydrogenase (PDH) complex, that catalyzes the overall conversion of pyruvate to acetyl-CoA and CO(2). This Escherichia coli O157:H7 protein is Pyruvate dehydrogenase E1 component (aceE).